The primary structure comprises 238 residues: MKINLFFVFLFELLHFVAAYSCEGDESAAIEAMNVLQVPYEKYNTDPVCAFDNSTVVELSDKTWDHVIESGKWFVQLTAEGCANCTLGELLFNDLSHAFHEKYPDVHFARVYLSSSLELSVRLLISRIPSYYFIDNQNFYRVSPQVLPKNKAIALYEKDGFKSMKKEQGFFSVNGPLKSFYWVFGKALALYGHLSQKYTPLGMNVAIFGISAYIMYRSSKKAKQKQAAAAAAAAAKKK.

Positions 1–19 are cleaved as a signal peptide; sequence MKINLFFVFLFELLHFVAA. The Lumenal portion of the chain corresponds to 20 to 197; sequence YSCEGDESAA…LALYGHLSQK (178 aa). The helical transmembrane segment at 198-216 threads the bilayer; sequence YTPLGMNVAIFGISAYIMY. Residues 217 to 238 lie on the Cytoplasmic side of the membrane; that stretch reads RSSKKAKQKQAAAAAAAAAKKK.

Its subcellular location is the endoplasmic reticulum membrane. This is an uncharacterized protein from Schizosaccharomyces pombe (strain 972 / ATCC 24843) (Fission yeast).